We begin with the raw amino-acid sequence, 140 residues long: DegV domain-containing 15.5 kDa protein (140 aa).

Positions 4-140 (QIIVTDSTSD…ELVLLQSKKI (137 aa)) constitute a DegV domain. Residues T61 and S93 each contribute to the hexadecanoate site.

In terms of biological role, may bind long-chain fatty acids, such as palmitate, and may play a role in lipid transport or fatty acid metabolism. This chain is DegV domain-containing 15.5 kDa protein, found in Staphylococcus aureus.